We begin with the raw amino-acid sequence, 271 residues long: Tryptophan synthase alpha chain (271 aa).

Active-site proton acceptor residues include glutamate 56 and aspartate 67.

It belongs to the TrpA family. Tetramer of two alpha and two beta chains.

It catalyses the reaction (1S,2R)-1-C-(indol-3-yl)glycerol 3-phosphate + L-serine = D-glyceraldehyde 3-phosphate + L-tryptophan + H2O. The protein operates within amino-acid biosynthesis; L-tryptophan biosynthesis; L-tryptophan from chorismate: step 5/5. In terms of biological role, the alpha subunit is responsible for the aldol cleavage of indoleglycerol phosphate to indole and glyceraldehyde 3-phosphate. This is Tryptophan synthase alpha chain from Mycobacterium intracellulare.